Here is a 283-residue protein sequence, read N- to C-terminus: Bifunctional protein FolD (283 aa).

Residues 165 to 167 (GRS), serine 190, and valine 231 contribute to the NADP(+) site.

This sequence belongs to the tetrahydrofolate dehydrogenase/cyclohydrolase family. As to quaternary structure, homodimer.

It catalyses the reaction (6R)-5,10-methylene-5,6,7,8-tetrahydrofolate + NADP(+) = (6R)-5,10-methenyltetrahydrofolate + NADPH. It carries out the reaction (6R)-5,10-methenyltetrahydrofolate + H2O = (6R)-10-formyltetrahydrofolate + H(+). It functions in the pathway one-carbon metabolism; tetrahydrofolate interconversion. Its function is as follows. Catalyzes the oxidation of 5,10-methylenetetrahydrofolate to 5,10-methenyltetrahydrofolate and then the hydrolysis of 5,10-methenyltetrahydrofolate to 10-formyltetrahydrofolate. In Bacillus pumilus (strain SAFR-032), this protein is Bifunctional protein FolD.